The chain runs to 431 residues: Serine--tRNA ligase (431 aa).

238–240 (TAE) serves as a coordination point for L-serine. 269-271 (RSE) contacts ATP. E292 lines the L-serine pocket. ATP is bound at residue 356–359 (EISS). S392 provides a ligand contact to L-serine.

This sequence belongs to the class-II aminoacyl-tRNA synthetase family. Type-1 seryl-tRNA synthetase subfamily. As to quaternary structure, homodimer. The tRNA molecule binds across the dimer.

The protein resides in the cytoplasm. It catalyses the reaction tRNA(Ser) + L-serine + ATP = L-seryl-tRNA(Ser) + AMP + diphosphate + H(+). The enzyme catalyses tRNA(Sec) + L-serine + ATP = L-seryl-tRNA(Sec) + AMP + diphosphate + H(+). Its pathway is aminoacyl-tRNA biosynthesis; selenocysteinyl-tRNA(Sec) biosynthesis; L-seryl-tRNA(Sec) from L-serine and tRNA(Sec): step 1/1. Functionally, catalyzes the attachment of serine to tRNA(Ser). Is also able to aminoacylate tRNA(Sec) with serine, to form the misacylated tRNA L-seryl-tRNA(Sec), which will be further converted into selenocysteinyl-tRNA(Sec). The protein is Serine--tRNA ligase of Pectobacterium atrosepticum (strain SCRI 1043 / ATCC BAA-672) (Erwinia carotovora subsp. atroseptica).